We begin with the raw amino-acid sequence, 541 residues long: Pseudokinase FAM20A (541 aa).

A signal peptide spans 1–33; that stretch reads MPGLRRDRLLALLLLGALFSADLYFHLWPQVQR. 3 N-linked (GlcNAc...) asparagine glycosylation sites follow: Asn70, Asn145, and Asn287. Disulfide bonds link Cys314-Cys330, Cys319-Cys323, Cys378-Cys452, and Cys453-Cys512. An N-linked (GlcNAc...) asparagine glycan is attached at Asn388. Residue Asn538 is glycosylated (N-linked (GlcNAc...) asparagine).

The protein belongs to the FAM20 family. In terms of assembly, interacts with FAM20C; probably forming a heterotetramer of 2 subunits of FAM20A and 2 subunits of FAM20C. In terms of processing, N-glycosylated. In terms of tissue distribution, in the mammary gland, expressed at higher levels in lactating mice than in virgin mice. Observed throughout the tissues of the mandibular incisor, including the secretory and maturation stage ameloblasts, the suprabasal layers of the gingival epithelium and the odontoblasts. Weak expression in the enamel matrix.

The protein localises to the secreted. The protein resides in the golgi apparatus. It is found in the endoplasmic reticulum. Pseudokinase that acts as an allosteric activator of the Golgi serine/threonine protein kinase FAM20C and is involved in biomineralization of teeth. Forms a complex with FAM20C and increases the ability of FAM20C to phosphorylate the proteins that form the 'matrix' that guides the deposition of the enamel minerals. This is Pseudokinase FAM20A from Mus musculus (Mouse).